The primary structure comprises 707 residues: MGGKQDQDKEAYGKPAKYDPSFRGPIRNRSCTDIICCVLFFLFILGYIAVGILAWVYGDPKQVLYPRNSTGAYCGIGENKEKPYLLYFNIFSCVLNTNIIAIAQNGLKCPTPQVCVSSCPEASWTVEPRQFSQTVEQVFYAANRNFCLPGVPGNMQVLQSLQQELCPSFLLPSTPALGRCFPWTNSTVPELPGISNTSISQSISGLLDSLNARDISVKIFEDFAQSWYWILIALGLALVLSLLFILLLRLVAGPLVFVLIIGVLGVLAYGIYHCWEEYRVLRDKGASISQLGFTTNLSAYRNVQETWLAALIILAVLEGVLLLMLIFLRQRICIAIALLKEASRAVGYIMSTMFYPLVTFALLLVCIAYWAIIALFLATSGQPQYVFWAPNSSLPGCEKVPMNTSCDPMEQVNSSCPGLMCVFQGYQSTGLAQRSLFNLQIYAVLGLFWTINWVLALGQCVLAGAFASFYWAFHKPRDIPTFPLGSAFLRTLRYHTGSLAFGALILTLVQIARVILEYIDHKLRGAQNPLTRCILCCFKCCLWCLEKFIKFLNRNAYIMIAIYGKNFCVSAKNAFMLLMRNIVRVVVLDKVTDLLLFFGKLLVVGGVGVLSFFFFTGRIPSLGKTFENPQLNYYWLPIMVSILGAYLIASGFFSVFGMCVDTLFLCFLEDLERNDGSADRPYYMSKSLLKILGKKNKGTPGDKKRKK.

Residues 1-33 are Cytoplasmic-facing; sequence MGGKQDQDKEAYGKPAKYDPSFRGPIRNRSCTD. The chain crosses the membrane as a helical span at residues 34-54; sequence IICCVLFFLFILGYIAVGILA. Residues 55–227 lie on the Extracellular side of the membrane; sequence WVYGDPKQVL…KIFEDFAQSW (173 aa). Residues N68, N185, and N196 are each glycosylated (N-linked (GlcNAc...) asparagine). A helical membrane pass occupies residues 228 to 248; sequence YWILIALGLALVLSLLFILLL. Over 249–250 the chain is Cytoplasmic; that stretch reads RL. The chain crosses the membrane as a helical span at residues 251–271; the sequence is VAGPLVFVLIIGVLGVLAYGI. Over 272–307 the chain is Extracellular; the sequence is YHCWEEYRVLRDKGASISQLGFTTNLSAYRNVQETW. N-linked (GlcNAc...) asparagine glycosylation is present at N296. A helical transmembrane segment spans residues 308–328; that stretch reads LAALIILAVLEGVLLLMLIFL. The Cytoplasmic segment spans residues 329-356; that stretch reads RQRICIAIALLKEASRAVGYIMSTMFYP. The chain crosses the membrane as a helical span at residues 357-377; sequence LVTFALLLVCIAYWAIIALFL. Topologically, residues 378–452 are extracellular; it reads ATSGQPQYVF…AVLGLFWTIN (75 aa). Residues N391, N403, and N413 are each glycosylated (N-linked (GlcNAc...) asparagine). A helical transmembrane segment spans residues 453 to 473; it reads WVLALGQCVLAGAFASFYWAF. The Cytoplasmic portion of the chain corresponds to 474–498; the sequence is HKPRDIPTFPLGSAFLRTLRYHTGS. A helical transmembrane segment spans residues 499–519; that stretch reads LAFGALILTLVQIARVILEYI. Residues 520-557 lie on the Extracellular side of the membrane; sequence DHKLRGAQNPLTRCILCCFKCCLWCLEKFIKFLNRNAY. Residues 558 to 578 traverse the membrane as a helical segment; sequence IMIAIYGKNFCVSAKNAFMLL. At 579 to 594 the chain is on the cytoplasmic side; sequence MRNIVRVVVLDKVTDL. A helical transmembrane segment spans residues 595 to 615; sequence LLFFGKLLVVGGVGVLSFFFF. Over 616 to 635 the chain is Extracellular; that stretch reads TGRIPSLGKTFENPQLNYYW. Residues 636-656 form a helical membrane-spanning segment; the sequence is LPIMVSILGAYLIASGFFSVF. Over 657–707 the chain is Cytoplasmic; it reads GMCVDTLFLCFLEDLERNDGSADRPYYMSKSLLKILGKKNKGTPGDKKRKK.

The protein belongs to the CTL (choline transporter-like) family. In terms of processing, N-glycosylated; N-glycosylation of Asn-68 and Asn-391 is required for a proper thiamine pyrophosphate uptake.

Its subcellular location is the membrane. It localises to the apical cell membrane. The catalysed reaction is choline(out) + n H(+)(in) = choline(in) + n H(+)(out). It carries out the reaction thiamine diphosphate(out) = thiamine diphosphate(in). Functionally, choline transporter that plays a role in the choline-acetylcholine system and is required to the efferent innervation of hair cells in the olivocochlear bundle for the maintenance of physiological function of outer hair cells and the protection of hair cells from acoustic injury. Also described as a thiamine pyrophosphate transporter in colon, may mediate the absorption of microbiota-generated thiamine pyrophosphate and contribute to host thiamine (vitamin B1) homeostasis. The protein is Choline transporter-like protein 4 of Bos taurus (Bovine).